Reading from the N-terminus, the 216-residue chain is LHFPL tetraspan subfamily member 3 protein (216 aa).

4 consecutive transmembrane segments (helical) span residues 22–42 (IGVLWAIFTTLFAIVNVVCFV), 96–116 (FFIGMSMVLVLSCIGCFALFF), 126–146 (ICGWMQLAAGTCLVLGCMIYP), and 177–197 (ILAIMGILDALILSFLAFVLG).

This sequence belongs to the LHFP family.

The protein resides in the membrane. The polypeptide is LHFPL tetraspan subfamily member 3 protein (Danio rerio (Zebrafish)).